Reading from the N-terminus, the 164-residue chain is Ribosomal RNA large subunit methyltransferase H (164 aa).

Glycine 109 contributes to the S-adenosyl-L-methionine binding site.

This sequence belongs to the RNA methyltransferase RlmH family. In terms of assembly, homodimer.

The protein resides in the cytoplasm. It carries out the reaction pseudouridine(1915) in 23S rRNA + S-adenosyl-L-methionine = N(3)-methylpseudouridine(1915) in 23S rRNA + S-adenosyl-L-homocysteine + H(+). Specifically methylates the pseudouridine at position 1915 (m3Psi1915) in 23S rRNA. The polypeptide is Ribosomal RNA large subunit methyltransferase H (Methylobacterium radiotolerans (strain ATCC 27329 / DSM 1819 / JCM 2831 / NBRC 15690 / NCIMB 10815 / 0-1)).